The following is a 273-amino-acid chain: Phosphatidylglycerol--prolipoprotein diacylglyceryl transferase (273 aa).

The next 7 membrane-spanning stretches (helical) occupy residues 19–39 (VHWY…LASY), 55–75 (LVFY…VLFY), 90–110 (VWTG…AMIL), 125–145 (FIAP…FIGA), 174–194 (PSQI…LWWF), 202–222 (MAVS…VEFF), and 230–250 (GFIL…MLLI). Residue arginine 138 participates in a 1,2-diacyl-sn-glycero-3-phospho-(1'-sn-glycerol) binding.

The protein belongs to the Lgt family.

Its subcellular location is the cell inner membrane. It catalyses the reaction L-cysteinyl-[prolipoprotein] + a 1,2-diacyl-sn-glycero-3-phospho-(1'-sn-glycerol) = an S-1,2-diacyl-sn-glyceryl-L-cysteinyl-[prolipoprotein] + sn-glycerol 1-phosphate + H(+). It participates in protein modification; lipoprotein biosynthesis (diacylglyceryl transfer). Functionally, catalyzes the transfer of the diacylglyceryl group from phosphatidylglycerol to the sulfhydryl group of the N-terminal cysteine of a prolipoprotein, the first step in the formation of mature lipoproteins. The polypeptide is Phosphatidylglycerol--prolipoprotein diacylglyceryl transferase (Acinetobacter baylyi (strain ATCC 33305 / BD413 / ADP1)).